A 435-amino-acid chain; its full sequence is Adenylosuccinate synthetase (435 aa).

Residues 17 to 23 (GDEGKGK) and 45 to 47 (GHT) each bind GTP. Asp18 acts as the Proton acceptor in catalysis. Residues Asp18 and Gly45 each coordinate Mg(2+). Residues 18 to 21 (DEGK), 43 to 46 (NAGH), Thr134, Arg148, Gln229, Thr244, and Arg308 contribute to the IMP site. His46 serves as the catalytic Proton donor. 304 to 310 (SVTGRPR) is a substrate binding site. Residues Arg310, 336 to 338 (KLD), and 418 to 420 (STG) each bind GTP.

Belongs to the adenylosuccinate synthetase family. Homodimer. Mg(2+) is required as a cofactor.

It localises to the cytoplasm. It carries out the reaction IMP + L-aspartate + GTP = N(6)-(1,2-dicarboxyethyl)-AMP + GDP + phosphate + 2 H(+). The protein operates within purine metabolism; AMP biosynthesis via de novo pathway; AMP from IMP: step 1/2. In terms of biological role, plays an important role in the de novo pathway of purine nucleotide biosynthesis. Catalyzes the first committed step in the biosynthesis of AMP from IMP. The sequence is that of Adenylosuccinate synthetase from Bordetella pertussis (strain Tohama I / ATCC BAA-589 / NCTC 13251).